A 171-amino-acid polypeptide reads, in one-letter code: UPF0763 protein HPSH_03535 (171 aa).

This sequence belongs to the UPF0763 family.

The sequence is that of UPF0763 protein HPSH_03535 from Helicobacter pylori (strain Shi470).